Consider the following 179-residue polypeptide: Cell division protein SepF (179 aa).

The interval 22 to 55 is disordered; that stretch reads LPYEKRDEPVFTSVNSSQEPALPMNQPSQSAGTK. The span at 33 to 55 shows a compositional bias: polar residues; sequence TSVNSSQEPALPMNQPSQSAGTK.

This sequence belongs to the SepF family. In terms of assembly, homodimer. Interacts with FtsZ.

The protein localises to the cytoplasm. In terms of biological role, cell division protein that is part of the divisome complex and is recruited early to the Z-ring. Probably stimulates Z-ring formation, perhaps through the cross-linking of FtsZ protofilaments. Its function overlaps with FtsA. This is Cell division protein SepF from Streptococcus pneumoniae (strain Taiwan19F-14).